The primary structure comprises 115 residues: Large ribosomal subunit protein bL20 (115 aa).

Belongs to the bacterial ribosomal protein bL20 family.

Functionally, binds directly to 23S ribosomal RNA and is necessary for the in vitro assembly process of the 50S ribosomal subunit. It is not involved in the protein synthesizing functions of that subunit. The protein is Large ribosomal subunit protein bL20 of Prochlorococcus marinus (strain MIT 9313).